Reading from the N-terminus, the 332-residue chain is Trace amine-associated receptor 1 (332 aa).

The Extracellular segment spans residues 1 to 23; it reads MHLCHAITNISHRNSDWSREVQA. The N-linked (GlcNAc...) asparagine glycan is linked to Asn9. A helical transmembrane segment spans residues 24-48; it reads SLYSLMSLIILATLVGNLIVIISIS. Residues 49 to 58 lie on the Cytoplasmic side of the membrane; it reads HFKQLHTPTN. Residues 59–80 traverse the membrane as a helical segment; that stretch reads WLLHSMAIVDFLLGCLIMPCSM. Residues 81–95 lie on the Extracellular side of the membrane; sequence VRTVERCWYFGEILC. An intrachain disulfide couples Cys95 to Cys181. A helical transmembrane segment spans residues 96 to 118; it reads KVHTSTDIMLSSASIFHLAFISI. Asp102 lines the 2-phenylethylamine pocket. Residues 119-138 lie on the Cytoplasmic side of the membrane; it reads DRYCAVCDPLRYKAKINIST. Residues 139-160 traverse the membrane as a helical segment; it reads ILVMILVSWSLPAVYAFGMIFL. The Extracellular portion of the chain corresponds to 161-187; sequence ELNLKGVEELYRSQVSDLGGCSPFFSK. An extracellular Loop 2 (ECL2) region spans residues 174–185; the sequence is QVSDLGGCSPFF. The helical transmembrane segment at 188 to 210 threads the bilayer; sequence VSGVLAFMTSFYIPGSVMLFVYY. Topologically, residues 211–246 are cytoplasmic; it reads RIYFIAKGQARSINRTNVQVGLEGKSQAPQSKETKA. Residues 247–270 form a helical membrane-spanning segment; that stretch reads AKTLGIMVGVFLVCWCPFFLCTVL. Over 271–283 the chain is Extracellular; sequence DPFLGYVIPPSLN. Residues 284–304 traverse the membrane as a helical segment; that stretch reads DALYWFGYLNSALNPMVYAFF. The Cytoplasmic portion of the chain corresponds to 305-332; the sequence is YPWFRRALKMVLLGKIFQKDSSRSKLFL.

Belongs to the G-protein coupled receptor 1 family. Widely distributed throughout the brain. Strongly expressed in the mitral cell layer of the olfactory bulb, piriform cortex, the arcuate, motor, and mesencephalic trigeminal nuclei, lateral reticular and hypoglossal nuclei, cerebellar Purkinje cells, and ventral horn of the spinal cord. Moderately expressed in the frontal, entorhinal, and agranular cortices, the ventral pallidum, thalamus, hippocampus, several hypothalamic nuclei, ambiguus, dorsal raphe, and gigantocellular reticular nuclei. Weakly expressed in the septum, basal ganglia, amygdala, myelencephalon, and spinal cord dorsal horn. Particularly interesting is the moderate expression in several monoaminergic cell groups, namely the dorsal raphe, the locus coeruleus, and the ventral tegmental area.

It is found in the endomembrane system. It localises to the endoplasmic reticulum membrane. Its subcellular location is the cell membrane. With respect to regulation, activated by SEP-363856 small molecule: IHCH-7179 acts both as an agonist activator for HTR1A and TAAR1. Its function is as follows. Intracellular G-protein coupled receptor for trace amines, which recognizes endogenous amine-containing metabolites such as beta-phenylethylamine (beta-PEA), 3-iodothyronamine (T1AM), isoamylamine (IAA), cadaverine (CAD), cyclohexylamine (CHA), p-tyramine (p-TYR), trimethylamine (TMA), octopamine and tryptamine. Also functions as a receptor for various drugs and psychoactive substances, such as amphetamine and methamphetamine. Unresponsive to classical biogenic amines, such as epinephrine and histamine and only partially activated by dopamine and serotonin. Expressed in both the central and peripheral nervous system: TAAR1 activation regulates the activity of several neurotransmitter signaling pathways by (1) decreasing the basal firing rates of the neurons involved and by (2) lowering the sensitivity of receptors to neurotransmitters. Ligand binding causes a conformation change that triggers signaling via guanine nucleotide-binding proteins (G proteins) and modulates the activity of downstream effectors. TAAR1 is coupled with different G(i)/G(o)-, G(s)- or G(q)/G(11) classes of G alpha proteins depending on the ligand. CAD-binding is coupled to G(i)/G(o) G alpha proteins and mediates inhibition of adenylate cyclase activity. T1AM- or beta-PEA-binding is coupled to G(s) G alpha proteins and mediates activation of adenylate cyclase activity. CHA- or IAA-binding is coupled to G(q)/G(11) G alpha proteins and activates phospholipase C-beta, releasing diacylglycerol (DAG) and inositol 1,4,5-trisphosphate (IP3) second messengers. TMA-binding is coupled with all three G(i)/G(o)-, G(s)- or G(q)/G(11) G alpha protein subtypes. This is Trace amine-associated receptor 1 from Mus musculus (Mouse).